We begin with the raw amino-acid sequence, 467 residues long: Hydroxyacid-oxoacid transhydrogenase, mitochondrial (467 aa).

Lys-445 carries the N6-acetyllysine modification. Ser-452 carries the post-translational modification Phosphoserine.

The protein belongs to the iron-containing alcohol dehydrogenase family. Hydroxyacid-oxoacid transhydrogenase subfamily. In terms of tissue distribution, expressed in kidney and liver.

It localises to the mitochondrion. The enzyme catalyses (S)-3-hydroxybutanoate + 2-oxoglutarate = (R)-2-hydroxyglutarate + acetoacetate. It carries out the reaction 4-hydroxybutanoate + 2-oxoglutarate = (R)-2-hydroxyglutarate + succinate semialdehyde. Its function is as follows. Catalyzes the cofactor-independent reversible oxidation of gamma-hydroxybutyrate (GHB) to succinic semialdehyde (SSA) coupled to reduction of 2-ketoglutarate (2-KG) to D-2-hydroxyglutarate (D-2-HG). L-3-hydroxybutyrate (L-3-OHB) is also a substrate for HOT when using 2-KG as hydrogen acceptor, resulting in the formation of D-2-HG. The chain is Hydroxyacid-oxoacid transhydrogenase, mitochondrial (Adhfe1) from Rattus norvegicus (Rat).